We begin with the raw amino-acid sequence, 149 residues long: Arginine repressor (149 aa).

The protein belongs to the ArgR family.

Its subcellular location is the cytoplasm. Its pathway is amino-acid biosynthesis; L-arginine biosynthesis [regulation]. Regulates arginine biosynthesis genes. This Shouchella clausii (strain KSM-K16) (Alkalihalobacillus clausii) protein is Arginine repressor.